Consider the following 398-residue polypeptide: MAKRVHLFDWHKEHAKKIEEFAGWEMPIWYSSIKEEHLAVRNAVGVFDVSHMGEILFKGKDALKFLQYTTTNDISKPPAISGTYTLVLNERGAIKDETLVFNMGNNEYLMICDADAFEKLYAWFTYLKKTIEQFTKLDLEIELKTYDIAMFAVQGPKARDLAMDLFGIDINEMWWFQGRWVELDGIKMLLSRSGYTGENGFEVYIEDLNPYHPDEEKRGKPEKALHVWERILEEGQKYGIKPAGLGARDTLRLEAGYTLYGNDTKELQLLSTDIDEVTPLQANLEFAIYWDKDFIGKDALLKQKEKGLGRKLVHFKMLEKSVPREGYKVYANGELIGEVTSGTLSPLLNIGIGIAFVKEEYAKPGVEIEIDIRGTRKKAITVTPPFYDPKKYGLFREE.

Belongs to the GcvT family. In terms of assembly, the glycine cleavage system is composed of four proteins: P, T, L and H.

The catalysed reaction is N(6)-[(R)-S(8)-aminomethyldihydrolipoyl]-L-lysyl-[protein] + (6S)-5,6,7,8-tetrahydrofolate = N(6)-[(R)-dihydrolipoyl]-L-lysyl-[protein] + (6R)-5,10-methylene-5,6,7,8-tetrahydrofolate + NH4(+). Its function is as follows. The glycine cleavage system catalyzes the degradation of glycine. The protein is Probable aminomethyltransferase of Pyrococcus furiosus (strain ATCC 43587 / DSM 3638 / JCM 8422 / Vc1).